The primary structure comprises 357 residues: 4-hydroxyphenylpyruvate dioxygenase (357 aa).

VOC domains follow at residues 12 to 129 (GFEF…LIDR) and 158 to 313 (IIDH…IFSE). Fe cation contacts are provided by histidine 161, histidine 240, and glutamate 322.

The protein belongs to the 4HPPD family. Homotetramer. Fe cation is required as a cofactor.

The catalysed reaction is 3-(4-hydroxyphenyl)pyruvate + O2 = homogentisate + CO2. It participates in amino-acid degradation; L-phenylalanine degradation; acetoacetate and fumarate from L-phenylalanine: step 3/6. This Pseudomonas sp. (strain P.J. 874) protein is 4-hydroxyphenylpyruvate dioxygenase (hpd).